The following is a 778-amino-acid chain: Aerobic respiration control sensor protein ArcB (778 aa).

Residues methionine 1–methionine 25 are Cytoplasmic-facing. Residues leucine 26–leucine 46 traverse the membrane as a helical segment. Topologically, residues histidine 47–arginine 57 are periplasmic. Residues serine 58–glutamate 78 form a helical membrane-spanning segment. Over glutamine 79–lysine 778 the chain is Cytoplasmic. One can recognise a PAS domain in the interval glutamine 153–asparagine 223. One can recognise a PAC domain in the interval leucine 226 to arginine 278. Residues threonine 289–serine 507 form the Histidine kinase domain. Histidine 292 is modified (phosphohistidine; by autocatalysis). The 117-residue stretch at asparagine 527–tryptophan 643 folds into the Response regulatory domain. Aspartate 576 bears the 4-aspartylphosphate mark. Residues glycine 678–tryptophan 771 form the HPt domain. Histidine 717 bears the Phosphohistidine mark.

Activation requires a sequential transfer of a phosphate group from a His in the primary transmitter domain, to an Asp in the receiver domain and to a His in the secondary transmitter domain.

It is found in the cell inner membrane. The catalysed reaction is ATP + protein L-histidine = ADP + protein N-phospho-L-histidine.. Member of the two-component regulatory system ArcB/ArcA. Sensor-regulator protein for anaerobic repression of the arc modulon. Activates ArcA via a four-step phosphorelay. ArcB can also dephosphorylate ArcA by a reverse phosphorelay involving His-717 and Asp-576. This chain is Aerobic respiration control sensor protein ArcB (arcB), found in Escherichia coli (strain K12).